The following is a 624-amino-acid chain: Vitamin B12 transporter BtuB (624 aa).

An N-terminal signal peptide occupies residues 1 to 21; that stretch reads MTIKKYTLLTALSVTAFSGWA. The short motif at 31 to 38 is the TonB box element; that stretch reads NEMVVTAN. One can recognise a TBDR plug domain in the interval 43-157; the sequence is PKSSVLAPVD…IGGVVNIITE (115 aa). Cyanocob(III)alamin contacts are provided by residues leucine 88, serine 90, asparagine 97, and 115 to 116; that span reads IS. The region spanning 160–624 is the TBDR beta-barrel domain; it reads TLGSTLTAGL…EYYFTGSYNF (465 aa). 3 beta stranded membrane passes run 163 to 170, 174 to 183, and 189 to 200; these read STLTAGLG, YQNYNGSTQQ, and TTITLAGNYDYS. Ca(2+) contacts are provided by aspartate 204, glutamine 216, aspartate 218, and aspartate 220. The next 2 membrane-spanning stretches (beta stranded) occupy residues 222-232 and 237-253; these read YLGKMLWLGAN and EQFS…NRSD. The Ca(2+) site is built by tyrosine 254, aspartate 255, and aspartate 266. The next 17 membrane-spanning stretches (beta stranded) occupy residues 268–282, 284–301, 314–330, 333–342, 358–374, 376–386, 390–405, 408–422, 440–449, 455–464, 481–498, 502–517, 525–537, 543–557, 568–582, 595–606, and 612–624; these read RSLS…INFS, GGYA…QDYN, TLDD…NTYQ, LGNVGGGLDW, YEQR…QFVG, VTLEGAIRGDD, FGWH…WEFV, YRLI…KAPN, ESTQWEAAIT, LDWRLSAYRN, YYNV…TGSF, PLSH…PRNA, RRAK…QLDW, DWSV…RYDS, PVKL…LAVS, IANLFDKDYEMV, and PGRE…SYNF. Residue threonine 314 participates in cyanocob(III)alamin binding. A cyanocob(III)alamin-binding site is contributed by arginine 525. The short motif at 607–624 is the TonB C-terminal box element; sequence YGYQTPGREYYFTGSYNF.

Belongs to the TonB-dependent receptor family. BtuB (TC 1.B.14.3.1) subfamily.

Its subcellular location is the cell outer membrane. Functionally, involved in the active translocation of vitamin B12 (cyanocobalamin) across the outer membrane to the periplasmic space. It derives its energy for transport by interacting with the trans-periplasmic membrane protein TonB. The protein is Vitamin B12 transporter BtuB of Yersinia pseudotuberculosis serotype O:1b (strain IP 31758).